The primary structure comprises 175 residues: Nucleoside triphosphate/diphosphate phosphatase (175 aa).

Catalysis depends on Arg23, which acts as the Proton donor. The Mg(2+) site is built by Asn87, Asp103, Asp105, Asp107, Asp120, and Glu123.

It belongs to the Ntdp family. Requires Mg(2+) as cofactor.

The enzyme catalyses a ribonucleoside 5'-triphosphate + H2O = a ribonucleoside 5'-diphosphate + phosphate + H(+). It catalyses the reaction a ribonucleoside 5'-diphosphate + H2O = a ribonucleoside 5'-phosphate + phosphate + H(+). In terms of biological role, has nucleoside phosphatase activity towards nucleoside triphosphates and nucleoside diphosphates. This Listeria innocua serovar 6a (strain ATCC BAA-680 / CLIP 11262) protein is Nucleoside triphosphate/diphosphate phosphatase.